Reading from the N-terminus, the 263-residue chain is Chromosomal replication initiator protein DnaA (263 aa).

Position 1 (Asp-1) is a region of interest, domain I, interacts with DnaA modulators. A region of interest (domain II) is located at residue Asp-1. The interval 1–177 (DSGLGKTHLL…GIINKIEFSI (177 aa)) is domain III, AAA+ region. ATP contacts are provided by Gly-3, Gly-5, Lys-6, and Thr-7. The interval 178 to 263 (IQDNSAAPKI…KNYSEIGVAF (86 aa)) is domain IV, binds dsDNA.

The protein belongs to the DnaA family. As to quaternary structure, oligomerizes as a right-handed, spiral filament on DNA at oriC.

It localises to the cytoplasm. In terms of biological role, plays an essential role in the initiation and regulation of chromosomal replication. ATP-DnaA binds to the origin of replication (oriC) to initiate formation of the DNA replication initiation complex once per cell cycle. Binds the DnaA box (a 9 base pair repeat at the origin) and separates the double-stranded (ds)DNA. Forms a right-handed helical filament on oriC DNA; dsDNA binds to the exterior of the filament while single-stranded (ss)DNA is stabiized in the filament's interior. The ATP-DnaA-oriC complex binds and stabilizes one strand of the AT-rich DNA unwinding element (DUE), permitting loading of DNA polymerase. After initiation quickly degrades to an ADP-DnaA complex that is not apt for DNA replication. Binds acidic phospholipids. This chain is Chromosomal replication initiator protein DnaA, found in Spiroplasma apis.